The sequence spans 341 residues: Protein pelota homolog (341 aa).

Belongs to the eukaryotic release factor 1 family. Pelota subfamily. Monomer. Requires a divalent metal cation as cofactor.

The protein resides in the cytoplasm. May function in recognizing stalled ribosomes, interact with stem-loop structures in stalled mRNA molecules, and effect endonucleolytic cleavage of the mRNA. May play a role in the release non-functional ribosomes and degradation of damaged mRNAs. Has endoribonuclease activity. This Metallosphaera sedula (strain ATCC 51363 / DSM 5348 / JCM 9185 / NBRC 15509 / TH2) protein is Protein pelota homolog.